The primary structure comprises 873 residues: K(+)/H(+) antiporter 1 (873 aa).

Residues 1 to 23 (MANTVGGILSGVNPFHYNSSSPL) lie on the Extracellular side of the membrane. A helical transmembrane segment spans residues 24–44 (TLFLFQACLILLVCNLIHIPF). The Cytoplasmic portion of the chain corresponds to 45–51 (SMMRQPK). A helical transmembrane segment spans residues 52–72 (VISEVISGVILGPTIFGQIPN). Residues 73-82 (YTNTIFPTSS) are Extracellular-facing. Residues 83–103 (IPGLNLVANLGIILFMFFLGL) form a helical membrane-spanning segment. The Cytoplasmic portion of the chain corresponds to 104-116 (EVDIAFIKKHLKK). A helical transmembrane segment spans residues 117-137 (ALVIGIVTLAVPFGFGCLLAI). The Extracellular segment spans residues 138–154 (PLFHTYANKTEGERHIK). The helical transmembrane segment at 155–175 (FSVFMVFIAVSISVTAFPVLC) threads the bilayer. Topologically, residues 176-188 (RILNELRLIKDRA) are cytoplasmic. A helical membrane pass occupies residues 189-209 (GIVVLAAGIINDIMGWILLAL). The Extracellular portion of the chain corresponds to 210–220 (SIILSSAEGSP). Residues 221–241 (VNTVYILLITFAWFLIYFFPL) traverse the membrane as a helical segment. Topologically, residues 242 to 267 (KYLLRWVLIRTHELDRSKPSPLATMC) are cytoplasmic. A helical membrane pass occupies residues 268–288 (ILFIMFISAYFTDIIGVHPIF). Topologically, residues 289 to 316 (GAFIAGLVVPRDDHYVVKLTERMEDIPN) are extracellular. The helical transmembrane segment at 317 to 337 (IVFIPIYFAVAGLNVDLTLLN) threads the bilayer. The Cytoplasmic segment spans residues 338-341 (EGRD). Residues 342–362 (WGYVFATIGIAIFTKIISGTL) form a helical membrane-spanning segment. Over 363–375 (TAKLTGLFWREAT) the chain is Extracellular. A helical membrane pass occupies residues 376–396 (AAGVLMSCKGIVEIVVLTVGL). The Cytoplasmic segment spans residues 397 to 404 (NAGIISRK). A helical membrane pass occupies residues 405–425 (IFGMFVLMALVSTFVTTPLTQ). Over 426-726 (LVYPDSYRDG…DRFKRKRFNL (301 aa)) the chain is Extracellular. Residue Ser557 is modified to Phosphoserine. A Glycyl lysine isopeptide (Lys-Gly) (interchain with G-Cter in ubiquitin) cross-link involves residue Lys562. Residues 727–747 (LLPKPYLTQSDYLGLYLLLLI) traverse the membrane as a helical segment. Residues 748 to 873 (CYRDGYNNDN…TLIVHHFSSE (126 aa)) are Cytoplasmic-facing.

Belongs to the monovalent cation:proton antiporter 2 (CPA2) transporter (TC 2.A.37) family.

The protein resides in the membrane. In terms of biological role, potassium-proton antiport. The sequence is that of K(+)/H(+) antiporter 1 (KHA1) from Saccharomyces cerevisiae (strain ATCC 204508 / S288c) (Baker's yeast).